The chain runs to 57 residues: Large ribosomal subunit protein bL32 (57 aa).

Positions 1-19 (MATPKRRMSRANTRSRRAQ) are enriched in basic residues. The interval 1 to 20 (MATPKRRMSRANTRSRRAQW) is disordered.

Belongs to the bacterial ribosomal protein bL32 family.

The chain is Large ribosomal subunit protein bL32 from Mycobacterium leprae (strain Br4923).